The chain runs to 44 residues: Large ribosomal subunit protein bL34 (44 aa).

Belongs to the bacterial ribosomal protein bL34 family.

The polypeptide is Large ribosomal subunit protein bL34 (Buchnera aphidicola subsp. Cinara cedri (strain Cc)).